The sequence spans 419 residues: UDP-N-acetylmuramoylalanine--D-glutamate ligase (419 aa).

Residue 109–115 coordinates ATP; the sequence is GSTGKTT.

The protein belongs to the MurCDEF family.

It is found in the cytoplasm. It catalyses the reaction UDP-N-acetyl-alpha-D-muramoyl-L-alanine + D-glutamate + ATP = UDP-N-acetyl-alpha-D-muramoyl-L-alanyl-D-glutamate + ADP + phosphate + H(+). It participates in cell wall biogenesis; peptidoglycan biosynthesis. Its function is as follows. Cell wall formation. Catalyzes the addition of glutamate to the nucleotide precursor UDP-N-acetylmuramoyl-L-alanine (UMA). The sequence is that of UDP-N-acetylmuramoylalanine--D-glutamate ligase from Chlamydia felis (strain Fe/C-56) (Chlamydophila felis).